Reading from the N-terminus, the 48-residue chain is Fimbrial assembly protein, serogroup E2 (48 aa).

The chain is Fimbrial assembly protein, serogroup E2 (fimB) from Dichelobacter nodosus (Bacteroides nodosus).